Here is a 470-residue protein sequence, read N- to C-terminus: Metalloreductase STEAP4 (470 aa).

NADP(+) is bound by residues 27 to 30 (TGDF), 49 to 50 (SR), tyrosine 67, 81 to 85 (MHREH), asparagine 106, and alanine 139. Residues tryptophan 140 and aspartate 148 each contribute to the FAD site. Arginine 171 is an NADP(+) binding site. Transmembrane regions (helical) follow at residues 202-224 (FPFY…REVI) and 236-256 (YRLA…ILLA). Tyrosine 217 provides a ligand contact to Fe(3+). One can recognise a Ferric oxidoreductase domain in the interval 247–395 (FPITALILLA…LGYLTLVLCT (149 aa)). The FAD site is built by glutamine 269 and arginine 290. The next 2 helical transmembrane spans lie at 293–313 (LGLV…VIPI) and 342–362 (AWIN…FLLL). Histidine 304 provides a ligand contact to heme b. Tyrosine 307 contacts Fe(3+). Serine 366 and glutamine 383 together coordinate FAD. 2 helical membrane-spanning segments follow: residues 381–401 (FVQS…TLVY) and 419–439 (AYIL…ILIM). Heme b is bound at residue histidine 397.

It belongs to the STEAP family. As to quaternary structure, homotrimer. Interacts with PTK2/FAK1; the interaction may regulate PTK2 phosphorylation. The cofactor is FAD. Heme b is required as a cofactor. In terms of tissue distribution, expressed in white and brown adipose tissues cells, as well as in muscle and liver cells. Detected in joints and spleens of arthritic mice.

It is found in the cell membrane. Its subcellular location is the golgi apparatus membrane. The protein resides in the early endosome membrane. The enzyme catalyses 2 Fe(2+) + NADP(+) + H(+) = 2 Fe(3+) + NADPH. The catalysed reaction is 2 Cu(+) + NADP(+) + H(+) = 2 Cu(2+) + NADPH. Its function is as follows. Integral membrane protein that functions as a NADPH-dependent ferric-chelate reductase, using NADPH from one side of the membrane to reduce a Fe(3+) chelate that is bound on the other side of the membrane. Mediates sequential transmembrane electron transfer from NADPH to FAD and onto heme, and finally to the Fe(3+) chelate. Can also reduce Cu(2+) to Cu(1+). Plays a role in systemic metabolic homeostasis, integrating inflammatory and metabolic responses. Associated with obesity and insulin-resistance. Involved in inflammatory arthritis, through the regulation of inflammatory cytokines. Inhibits anchorage-independent cell proliferation. The sequence is that of Metalloreductase STEAP4 (Steap4) from Mus musculus (Mouse).